Consider the following 315-residue polypeptide: Calcium homeostasis modulator protein 6 (315 aa).

At 1–21 the chain is on the cytoplasmic side; the sequence is MEKFKAVLDLQIKHRSALGYG. A helical transmembrane segment spans residues 22–37; it reads LVTLLTAGGEKIFSTV. Topologically, residues 38-46 are extracellular; that stretch reads VFQCPCTAT. Cystine bridges form between Cys-41-Cys-127, Cys-43-Cys-156, and Cys-140-Cys-147. Residues 47–68 form a helical membrane-spanning segment; it reads LNLTYGLVFLLVPALALFLLGY. Residues 69-103 are Cytoplasmic-facing; sequence ALSARTWRLLTGCCSRSASTRSSSGLRSTLVCAQV. The helical transmembrane segment at 104 to 128 threads the bilayer; it reads SAVAALAPLTWVAVALLGGSFYQCA. The Extracellular segment spans residues 129 to 169; it reads VSGSTRLASYLCKDRNHSCIAKLPQVPCNKQEAEMQEILSQ. The chain crosses the membrane as a helical span at residues 170–192; it reads LKAQSQVLGWVLIAAVIFLLLVF. Topologically, residues 193-315 are cytoplasmic; it reads KCVSRCFSPV…DAAMANTHGV (123 aa).

Belongs to the CALHM family. In terms of assembly, oligomerizes to form decameric and undecameric channels.

The protein localises to the cell membrane. It catalyses the reaction ATP(in) = ATP(out). Its function is as follows. Pore-forming subunit of an ATP-permeable channel. In response to pathogen-derived and proinflammatory stimuli, relocates from intracellular compartments to NK-dendritic cell and NK-macrophage immune synapses where it mediates ATP efflux and NK cell activation involved in antimicrobial and antitumor responses. May assemble to form gap junction channel-like structures with gating and ion conductance likely regulated by membrane lipids and voltage rather than by extracellular calcium levels. This Rattus norvegicus (Rat) protein is Calcium homeostasis modulator protein 6.